Reading from the N-terminus, the 169-residue chain is NAD(P)H-quinone oxidoreductase subunit 6, chloroplastic (169 aa).

A run of 5 helical transmembrane segments spans residues 7 to 27, 29 to 49, 58 to 78, 90 to 110, and 139 to 159; these read FSSA…IFLP, IVYA…IYVL, AQVL…IMLV, SPPL…VQMI, and LLAF…AIVL.

It belongs to the complex I subunit 6 family. As to quaternary structure, NDH is composed of at least 16 different subunits, 5 of which are encoded in the nucleus.

It localises to the plastid. Its subcellular location is the chloroplast thylakoid membrane. It catalyses the reaction a plastoquinone + NADH + (n+1) H(+)(in) = a plastoquinol + NAD(+) + n H(+)(out). The catalysed reaction is a plastoquinone + NADPH + (n+1) H(+)(in) = a plastoquinol + NADP(+) + n H(+)(out). NDH shuttles electrons from NAD(P)H:plastoquinone, via FMN and iron-sulfur (Fe-S) centers, to quinones in the photosynthetic chain and possibly in a chloroplast respiratory chain. The immediate electron acceptor for the enzyme in this species is believed to be plastoquinone. Couples the redox reaction to proton translocation, and thus conserves the redox energy in a proton gradient. The sequence is that of NAD(P)H-quinone oxidoreductase subunit 6, chloroplastic (ndhG) from Nephroselmis olivacea (Green alga).